The following is a 746-amino-acid chain: Taurocyamine kinase (746 aa).

2 Approximate repeats span residues Met31 to Val393 and Met394 to His705. One can recognise a Phosphagen kinase N-terminal 1 domain in the interval Ser35 to Lys116. Positions Leu146–Leu382 constitute a Phosphagen kinase C-terminal 1 domain. ATP contacts are provided by residues Ser149–Arg153, His212, and Arg256. Residue Cys298 is part of the active site. Residues Arg307–His311 and Arg335–Glu340 contribute to the ATP site. The Phosphagen kinase N-terminal 2 domain maps to Pro398–Gly479. The region spanning Phe509–Leu746 is the Phosphagen kinase C-terminal 2 domain. ATP contacts are provided by residues Ser512–Arg516, His575, and Arg619. Cys661 is an active-site residue. ATP is bound by residues Arg670–Leu674 and Arg699–Glu704.

The protein belongs to the ATP:guanido phosphotransferase family. Mg(2+) is required as a cofactor.

It carries out the reaction taurocyamine + ATP = N-phosphotaurocyamine + ADP + H(+). This family of enzymes reversibly catalyzes the transfer of phosphate between ATP and various phosphogens (e.g. creatine phosphate). This chain is Taurocyamine kinase, found in Schistosoma mansoni (Blood fluke).